A 569-amino-acid polypeptide reads, in one-letter code: Mitochondrial import receptor subunit tomm-70 (569 aa).

Residues 1-12 are Mitochondrial intermembrane-facing; the sequence is MVETTGISDQTK. Residues 13–32 form a helical membrane-spanning segment; sequence KVLIGVAAAATVAGVGYLVY. Residues 33-569 lie on the Cytoplasmic side of the membrane; that stretch reads KSFGGSDLER…KRAAEMLDMY (537 aa). TPR repeat units follow at residues 44–77, 119–152, 221–254, and 510–544; these read LEEI…AGPN, TKAY…DSSL, DQKQ…PPAM, and LHLL…APPR.

This sequence belongs to the Tom70 family. Forms part of the preprotein translocase complex of the outer mitochondrial membrane (TOM complex). As to expression, expressed in body wall muscle cells, the pharynx and structures in the tail.

The protein resides in the mitochondrion outer membrane. Receptor that accelerates the import of all mitochondrial precursor proteins. This is Mitochondrial import receptor subunit tomm-70 from Caenorhabditis elegans.